The primary structure comprises 483 residues: Aspartyl/glutamyl-tRNA(Asn/Gln) amidotransferase subunit B (483 aa).

The protein belongs to the GatB/GatE family. GatB subfamily. Heterotrimer of A, B and C subunits.

The catalysed reaction is L-glutamyl-tRNA(Gln) + L-glutamine + ATP + H2O = L-glutaminyl-tRNA(Gln) + L-glutamate + ADP + phosphate + H(+). It catalyses the reaction L-aspartyl-tRNA(Asn) + L-glutamine + ATP + H2O = L-asparaginyl-tRNA(Asn) + L-glutamate + ADP + phosphate + 2 H(+). Functionally, allows the formation of correctly charged Asn-tRNA(Asn) or Gln-tRNA(Gln) through the transamidation of misacylated Asp-tRNA(Asn) or Glu-tRNA(Gln) in organisms which lack either or both of asparaginyl-tRNA or glutaminyl-tRNA synthetases. The reaction takes place in the presence of glutamine and ATP through an activated phospho-Asp-tRNA(Asn) or phospho-Glu-tRNA(Gln). In Rickettsia rickettsii (strain Sheila Smith), this protein is Aspartyl/glutamyl-tRNA(Asn/Gln) amidotransferase subunit B.